The sequence spans 1248 residues: Structural polyprotein (1248 aa).

Positions 1–10 are enriched in polar residues; that stretch reads MEFIPTQTFY. Residues 1 to 104 are disordered; sequence MEFIPTQTFY…KKKKPGRRER (104 aa). Low complexity predominate over residues 22–44; it reads RPTIQVIRPRPRPQRQAGQLAQL. Positions 36–68 are host transcription inhibition; sequence RQAGQLAQLISAVNKLTMRAVPQQKPRRNRKNK. Residues 60–72 show a composition bias toward basic residues; that stretch reads KPRRNRKNKKQKQ. Residues 61–99 carry the Nuclear localization signal motif; sequence PRRNRKNKKQKQKQQAPQNNTNQKKQPPKKKPAQKKKKP. Low complexity predominate over residues 73-85; sequence KQQAPQNNTNQKK. Residues 84 to 114 are binding to the viral RNA; the sequence is KKQPPKKKPAQKKKKPGRRERMCMKIENDCI. Residues 86-101 show a composition bias toward basic residues; sequence QPPKKKPAQKKKKPGR. Positions 99-113 are ribosome-binding; it reads PGRRERMCMKIENDC. A disulfide bridge links Cys-113 with Cys-128. The Peptidase S3 domain maps to 113-261; it reads CIFEVKHEGK…KITPEGAEEW (149 aa). The active-site Charge relay system is His-139. Residues 144 to 154 carry the Nuclear export signal motif; sequence IDNADLAKLAF. The interval 155–160 is interaction with spike glycoprotein E2; the sequence is KRSSKY. The Charge relay system role is filled by Asp-161. The tract at residues 183–193 is dimerization of the capsid protein; it reads PEGYYNWHHGA. Ser-213 functions as the Charge relay system in the catalytic mechanism. Positions 219-223 are dimerization of the capsid protein; it reads DNKGR. The segment at 262–274 is functions as an uncleaved signal peptide for the precursor of protein E3/E2; sequence SLAIPVMCLLANT. Topologically, residues 262–692 are extracellular; it reads SLAIPVMCLL…YYYELYPTMT (431 aa). Intrachain disulfides connect Cys-269–Cys-278, Cys-283–Cys-287, Cys-286–Cys-318, Cys-344–Cys-450, Cys-347–Cys-353, Cys-416–Cys-430, Cys-478–Cys-591, Cys-526–Cys-550, and Cys-528–Cys-545. Asn-273 carries an N-linked (GlcNAc...) asparagine; by host glycan. 2 interaction with host Mxra8 receptor regions span residues 351–354 and 387–389; these read HSCH and HDW. Interaction with host Mxra8 receptor stretches follow at residues 509–512 and 541–547; these read QSGN and VINNCKV. N-linked (GlcNAc...) asparagine; by host glycans are attached at residues Asn-588 and Asn-670. The chain crosses the membrane as a helical span at residues 693-713; that stretch reads VVVVSVASFILLSMVGMAVGM. Residues 714 to 748 are Cytoplasmic-facing; the sequence is CMCARRRCITPYELTPGATVPFLLSLICCIRTAKA. An interaction with the capsid protein region spans residues 716–720; that stretch reads CARRR. S-palmitoyl cysteine; by host attachment occurs at residues Cys-721, Cys-741, and Cys-742. Positions 721 to 741 are transient transmembrane before p62-6K protein processing; that stretch reads CITPYELTPGATVPFLLSLIC. An intrachain disulfide couples Cys-721 to Cys-742. At 749-763 the chain is on the extracellular side; that stretch reads ATYQEAAVYLWNEQQ. A helical transmembrane segment spans residues 764–784; the sequence is PLFWLQALIPLAALIVLCNCL. Residues 785–795 are Cytoplasmic-facing; the sequence is RLLPCCCKTLA. A helical transmembrane segment spans residues 796 to 816; the sequence is FLAVMSIGAHTVSAYEHVTVI. At 817 to 1224 the chain is on the extracellular side; that stretch reads PNTVGVPYKT…AMSWVQKITG (408 aa). 4 cysteine pairs are disulfide-bonded: Cys-858-Cys-923, Cys-871-Cys-903, Cys-872-Cys-905, and Cys-877-Cys-887. An E1 fusion peptide loop region spans residues 893–910; sequence VYPFMWGGAYCFCDAENT. N-linked (GlcNAc...) asparagine; by host glycans are attached at residues Asn-950 and Asn-1079. 4 disulfides stabilise this stretch: Cys-1068/Cys-1080, Cys-1110/Cys-1185, Cys-1115/Cys-1189, and Cys-1137/Cys-1179. The helical transmembrane segment at 1225–1245 threads the bilayer; that stretch reads GVGLVVAVAALILIVVLCVSF. Cys-1242 is lipidated: S-palmitoyl cysteine; by host. Cys-1242 carries S-stearoyl cysteine; by host lipidation. Over 1246 to 1248 the chain is Cytoplasmic; sequence SRH.

The protein belongs to the alphavirus structural polyprotein family. Homodimer. Homomultimer. Interacts with host karyopherin KPNA4; this interaction allows the nuclear import of the viral capsid protein. Interacts with spike glycoprotein E2. Interacts with host IRAK1; the interaction leads to inhibition of IRAK1-dependent signaling. In terms of assembly, the precursor of protein E3/E2 and E1 form a heterodimer shortly after synthesis. As to quaternary structure, interacts with spike glycoprotein E2. The precursor of protein E3/E2 and E1 form a heterodimer shortly after synthesis. Processing of the precursor of protein E3/E2 into E2 and E3 results in a heterodimer of the spike glycoproteins E2 and E1. Spike at virion surface are constituted of three E2-E1 heterodimers. After target cell attachment and endocytosis, E1 changes conformation to form homotrimers. Interacts with 6K protein. Interacts with host MXRA8; this interaction mediates virus entry. The interaction involves 2 adjacent E2-E1 heterodimers. Interacts with spike glycoprotein E1. Processing of the precursor of protein E3/E2 into E2 and E3 results in a heterodimer of the spike glycoproteins E2 and E1. Spike at virion surface are constituted of a trimer of E2-E1 heterodimers. Interacts with 6K protein. Interacts with host MXRA8; this interaction mediates virus entry. The interaction involves 2 adjacent E2-E1 heterodimers. In terms of assembly, oligomer. Interacts with spike glycoprotein E1. Interacts with spike glycoprotein E2. Post-translationally, specific enzymatic cleavages in vivo yield mature proteins. Capsid protein is auto-cleaved during polyprotein translation, unmasking a signal peptide at the N-terminus of the precursor of E3/E2. The remaining polyprotein is then targeted to the host endoplasmic reticulum, where host signal peptidase cleaves it into pE2, 6K and E1 proteins. pE2 is further processed to mature E3 and E2 by host furin in trans-Golgi vesicle. In terms of processing, palmitoylated via thioester bonds. These palmitoylations may induce disruption of the C-terminus transmembrane. This would result in the reorientation of E2 C-terminus from lumenal to cytoplasmic side. N-glycosylated. Post-translationally, palmitoylated via thioester bonds.

The protein resides in the virion. Its subcellular location is the host cytoplasm. It is found in the host cell membrane. It localises to the host nucleus. The protein localises to the virion membrane. The protein resides in the host Golgi apparatus. Its subcellular location is the host trans-Golgi network. It is found in the host endoplasmic reticulum. It catalyses the reaction Autocatalytic release of the core protein from the N-terminus of the togavirus structural polyprotein by hydrolysis of a -Trp-|-Ser- bond.. Forms an icosahedral capsid with a T=4 symmetry composed of 240 copies of the capsid protein surrounded by a lipid membrane through which penetrate 80 spikes composed of trimers of E1-E2 heterodimers. The capsid protein binds to the viral RNA genome at a site adjacent to a ribosome binding site for viral genome translation following genome release. Possesses a protease activity that results in its autocatalytic cleavage from the nascent structural protein. Following its self-cleavage, the capsid protein transiently associates with ribosomes, and within several minutes the protein binds to viral RNA and rapidly assembles into icosahedric core particles. The resulting nucleocapsid eventually associates with the cytoplasmic domain of the spike glycoprotein E2 at the cell membrane, leading to budding and formation of mature virions. In case of infection, new virions attach to target cells and after clathrin-mediated endocytosis their membrane fuses with the host endosomal membrane. This leads to the release of the nucleocapsid into the cytoplasm, followed by an uncoating event necessary for the genomic RNA to become accessible. The uncoating might be triggered by the interaction of capsid proteins with ribosomes. Binding of ribosomes would release the genomic RNA since the same region is genomic RNA-binding and ribosome-binding. Specifically inhibits interleukin-1 receptor-associated kinase 1/IRAK1-dependent signaling during viral entry, representing a means by which the alphaviruses may evade innate immune detection and activation prior to viral gene expression. Degrades host cyclic GMP-AMP synthase (CGAS) thereby inhibiting the cGAS-STING pathway. Its function is as follows. Provides the signal sequence for the translocation of the precursor of protein E3/E2 to the host endoplasmic reticulum. Furin-cleaved E3 remains associated with spike glycoprotein E1 and mediates pH protection of the latter during the transport via the secretory pathway. After virion release from the host cell, the assembly protein E3 is gradually released in the extracellular space. Functionally, plays a role in viral attachment to target host cell, by binding to the cell receptor MXRA8. Synthesized as a p62 precursor which is processed by furin at the cell membrane just before virion budding, giving rise to E2-E1 heterodimer. The p62-E1 heterodimer is stable, whereas E2-E1 is unstable and dissociate at low pH. p62 is processed at the last step, presumably to avoid E1 fusion activation before its final export to cell surface. E2 C-terminus contains a transitory transmembrane that would be disrupted by palmitoylation, resulting in reorientation of the C-terminal tail from lumenal to cytoplasmic side. This step is critical since E2 C-terminus is involved in budding by interacting with capsid proteins. This release of E2 C-terminus in cytoplasm occurs lately in protein export, and precludes premature assembly of particles at the endoplasmic reticulum membrane. In terms of biological role, acts as a viroporin that participates in virus glycoprotein processing and transport to the plasma membrane, cell permeabilization and budding of viral particles. Disrupts the calcium homeostasis of the cell, probably at the endoplasmic reticulum level. This leads to cytoplasmic calcium elevation. Because of its lipophilic properties, the 6K protein is postulated to influence the selection of lipids that interact with the transmembrane domains of the glycoproteins, which, in turn, affects the deformability of the bilayer required for the extreme curvature that occurs as budding proceeds. Present in low amount in virions, about 3% compared to viral glycoproteins. Class II viral fusion protein. Fusion activity is inactive as long as E1 is bound to E2 in mature virion. After virus attachment to target cell and endocytosis, acidification of the endosome induce dissociation of E1/E2 heterodimer and concomitant trimerization of the E1 subunits. This E1 trimer is fusion active, and promotes release of viral nucleocapsid in cytoplasm after endosome and viral membrane fusion. Efficient fusion requires the presence of cholesterol and sphingolipid in the target membrane. This chain is Structural polyprotein, found in Chikungunya virus (strain S27-African prototype) (CHIKV).